We begin with the raw amino-acid sequence, 124 residues long: Small ribosomal subunit protein uS12 (124 aa).

Disordered regions lie at residues 9–32 (RKGRRDKVAKTKTAALKGSPQRRG) and 105–124 (QGVKNRKQARSRYGAKKEKS). Basic residues predominate over residues 108 to 118 (KNRKQARSRYG).

The protein belongs to the universal ribosomal protein uS12 family. As to quaternary structure, part of the 30S ribosomal subunit. Contacts proteins S8 and S17. May interact with IF1 in the 30S initiation complex.

Its function is as follows. With S4 and S5 plays an important role in translational accuracy. Functionally, interacts with and stabilizes bases of the 16S rRNA that are involved in tRNA selection in the A site and with the mRNA backbone. Located at the interface of the 30S and 50S subunits, it traverses the body of the 30S subunit contacting proteins on the other side and probably holding the rRNA structure together. The combined cluster of proteins S8, S12 and S17 appears to hold together the shoulder and platform of the 30S subunit. In Nocardia farcinica (strain IFM 10152), this protein is Small ribosomal subunit protein uS12.